Here is a 427-residue protein sequence, read N- to C-terminus: Peptidase B (427 aa).

The Mn(2+) site is built by Lys-195 and Asp-200. Lys-207 is a catalytic residue. Positions 218, 277, and 279 each coordinate Mn(2+). The active site involves Arg-281.

The protein belongs to the peptidase M17 family. As to quaternary structure, homohexamer. Mn(2+) serves as cofactor.

Its subcellular location is the cytoplasm. It catalyses the reaction Release of an N-terminal amino acid, Xaa, from a peptide or arylamide. Xaa is preferably Glu or Asp but may be other amino acids, including Leu, Met, His, Cys and Gln.. In terms of biological role, probably plays an important role in intracellular peptide degradation. The sequence is that of Peptidase B from Salmonella agona (strain SL483).